Reading from the N-terminus, the 1826-residue chain is 1,3-beta-glucan synthase component bgs3 (1826 aa).

The span at 34-43 shows a compositional bias: polar residues; that stretch reads QSNDQYNNIQ. Residues 34-90 form a disordered region; that stretch reads QSNDQYNNIQHPAPSFANPFIHEQDDSYSDILEEEPDEDAYDSPERPSSTEEFISQD. Positions 59–75 are enriched in acidic residues; the sequence is DSYSDILEEEPDEDAYD. 7 helical membrane passes run 427 to 447, 465 to 485, 504 to 524, 543 to 563, 597 to 617, 637 to 657, and 660 to 680; these read IWILHISVFWYFTVYNSPTIY, WCAPALAGAVASFISFLALIL, LIFVSILIALNIVPAAFIFGF, FFFSIGCVAYQSFIPLPFLLG, AALWITVFIAKFVESYYFLTL, FMIGASLCSHQPKFLLSLVYL, and LVLFFLDTYLWYMLISTMFSI. Phosphoserine is present on Ser885. The next 11 helical transmembrane spans lie at 1272–1292, 1329–1349, 1375–1397, 1417–1437, 1438–1458, 1531–1551, 1571–1591, 1607–1627, 1642–1662, 1701–1721, and 1770–1790; these read VFIMISMQLLMLVFVNLGAMY, IISIFIVFFISFLPLVVHDLL, VTQNYANSIFTNLTYGGARYIAT, GSSIYLGSRLIMMLLFGTMTV, WTTHYVYFWVTMFALVICPFI, IFTEVFLPACFAFFTICAYTF, IWIMAALPIAISTAALLILLM, YGAVLAALAHAVSVFGLVFTF, VLGCIVIFAIHRLVFKLVVVF, CKVVEMNLFAMDFILSHCILF, and SLLFFALLCTFVAMIVVPLVL.

Belongs to the glycosyltransferase 48 family. In terms of assembly, component of the 1,3-beta-glucan synthase (GS) complex, composed of at least the alternate catalytic subunits bgs1, bgs2, bgs3, and bgs4, and a regulatory subunit chr4.

It is found in the membrane. The enzyme catalyses [(1-&gt;3)-beta-D-glucosyl](n) + UDP-alpha-D-glucose = [(1-&gt;3)-beta-D-glucosyl](n+1) + UDP + H(+). In terms of biological role, alternate catalytic subunit of the 1,3-beta-glucan synthase (GS) complex. Synthesizes 1,3-beta-glucan, a major structural component of the yeast cell wall. Required for cell wall biosynthesis and cell elongation. The polypeptide is 1,3-beta-glucan synthase component bgs3 (Schizosaccharomyces pombe (strain 972 / ATCC 24843) (Fission yeast)).